A 142-amino-acid polypeptide reads, in one-letter code: Transcriptional regulator MraZ (142 aa).

2 consecutive SpoVT-AbrB domains span residues 5–47 and 76–119; these read NYQH…TNQE and SLTV…DINA.

The protein belongs to the MraZ family. As to quaternary structure, forms oligomers.

It localises to the cytoplasm. The protein localises to the nucleoid. This Mycoplasmoides gallisepticum (strain R(low / passage 15 / clone 2)) (Mycoplasma gallisepticum) protein is Transcriptional regulator MraZ.